The primary structure comprises 505 residues: Prenylcysteine oxidase 1 (505 aa).

Positions 1 to 27 (MGRVVAELVSSLLGLWLLLCSCGCPEG) are cleaved as a signal peptide. N-linked (GlcNAc...) asparagine glycosylation is found at asparagine 196, asparagine 323, and asparagine 353.

The protein belongs to the prenylcysteine oxidase family. Requires FAD as cofactor. Widely expressed.

The protein resides in the lysosome. The catalysed reaction is an S-polyprenyl-L-cysteine + O2 + H2O = a polyprenal + L-cysteine + H2O2. It catalyses the reaction S-(2E,6E)-farnesyl-L-cysteine + O2 + H2O = (2E,6E)-farnesal + L-cysteine + H2O2. The enzyme catalyses [(2E,6E,10E)-geranylgeranyl]-L-cysteine + O2 + H2O = (2E,6E,10E)-geranylgeranial + L-cysteine + H2O2. In terms of biological role, prenylcysteine oxidase that cleaves the thioether bond of prenyl-L-cysteines, such as farnesylcysteine and geranylgeranylcysteine. Only active against free prenylcysteines and not prenylcysteine residues within prenylated proteins or peptides. Involved in the final step in the degradation of prenylated proteins, by degrading prenylcysteines after the protein has been degraded. This is Prenylcysteine oxidase 1 from Homo sapiens (Human).